Reading from the N-terminus, the 549-residue chain is Glucose-6-phosphate isomerase (549 aa).

E355 functions as the Proton donor in the catalytic mechanism. Catalysis depends on residues H386 and K514.

The protein belongs to the GPI family.

The protein resides in the cytoplasm. It carries out the reaction alpha-D-glucose 6-phosphate = beta-D-fructose 6-phosphate. Its pathway is carbohydrate biosynthesis; gluconeogenesis. It functions in the pathway carbohydrate degradation; glycolysis; D-glyceraldehyde 3-phosphate and glycerone phosphate from D-glucose: step 2/4. Catalyzes the reversible isomerization of glucose-6-phosphate to fructose-6-phosphate. The chain is Glucose-6-phosphate isomerase from Salmonella enteritidis PT4 (strain P125109).